A 291-amino-acid polypeptide reads, in one-letter code: uncharacterized protein (291 aa).

6 helical membrane passes run 13–33, 40–60, 81–101, 128–148, 158–178, and 220–240; these read FDLF…MEMG, LGTV…LGFL, GFLN…LICI, FGLF…RLLL, VILG…YLEY, and GNVW…ILLA. N-linked (GlcNAc...) asparagine glycosylation occurs at Asn249. Residues 269–291 form a disordered region; that stretch reads MASEDPPKDPLPRQEGGGGDTIA.

The protein resides in the membrane. This is an uncharacterized protein from Encephalitozoon cuniculi (strain GB-M1) (Microsporidian parasite).